Here is a 334-residue protein sequence, read N- to C-terminus: Glycerol-3-phosphate dehydrogenase [NAD(P)+] 2 (334 aa).

Residues W16, R36, R37, and K110 each contribute to the NADPH site. The sn-glycerol 3-phosphate site is built by K110 and G140. A144 serves as a coordination point for NADPH. Residues K195, D248, S258, R259, and N260 each contribute to the sn-glycerol 3-phosphate site. Residue K195 is the Proton acceptor of the active site. Residue R259 participates in NADPH binding. NADPH-binding residues include V282 and E284.

It belongs to the NAD-dependent glycerol-3-phosphate dehydrogenase family.

Its subcellular location is the cytoplasm. The enzyme catalyses sn-glycerol 3-phosphate + NAD(+) = dihydroxyacetone phosphate + NADH + H(+). The catalysed reaction is sn-glycerol 3-phosphate + NADP(+) = dihydroxyacetone phosphate + NADPH + H(+). It participates in membrane lipid metabolism; glycerophospholipid metabolism. In terms of biological role, catalyzes the reduction of the glycolytic intermediate dihydroxyacetone phosphate (DHAP) to sn-glycerol 3-phosphate (G3P), the key precursor for phospholipid synthesis. This chain is Glycerol-3-phosphate dehydrogenase [NAD(P)+] 2, found in Mycobacterium tuberculosis (strain ATCC 25618 / H37Rv).